Reading from the N-terminus, the 418-residue chain is Chromo domain-containing protein rhino (418 aa).

One can recognise a Chromo domain in the interval 24–74; it reads YVVEKILGKRFVNGRPQVLVKWSGFPNENNTWEPLENVGNCMKLVSDFESE. 2 stretches are compositionally biased toward low complexity: residues 84–99 and 107–120; these read AKSVGKSKSSPSSSGP and SSSKKTQQHSKSVQ. 2 disordered regions span residues 84-167 and 199-337; these read AKSV…TDST and PTKD…RCPR. The span at 131–143 shows a compositional bias: basic residues; the sequence is NQKKGKNIKKTAG. Over residues 152-167 the composition is skewed to polar residues; that stretch reads PKTQMPSTSQVSTDST. Basic and acidic residues predominate over residues 218–228; sequence RLIEFPQREDA. A compositionally biased stretch (low complexity) spans 258 to 275; the sequence is GESSSSMSLPTVSSTSSE. Residues 276–285 are compositionally biased toward basic and acidic residues; the sequence is KSIKVTKSEP. Residues 353–418 form a required for interaction with del/deadlock region; it reads TKPFGVNRGL…FESLRIIVPK (66 aa).

Homodimer in solution. Dimerization is essential for chromatin binding. Component of the Rhino-Deadlock-Cutoff (RDC) complex, composed of rhi/rhino, del/deadlock and cuff/cutoff. Interacts (via C-terminus) with del/deadlock (via N-terminus); this interaction is direct. Two copies of del/deadlock associate with each rhi/rhino dimer. Interacts with cuff/cutoff; this interaction is indirect and is mediated by del/deadlock. Interacts (via Chromo domain) with kipf/kipferl (via C2H2 type zinc finger 4). Interacts (via Chromo domain) with His3/histone H3 (via N-terminus di- or tri-methylated on 'Lys-10' (H3K9me2/3)); this interaction is direct. Two His3 N-terminal tails oriented anti-parallel to each other are required for dimer binding to His3. Female specific, expressed in both somatic and germline cells but highly enriched in ovaries. In the germarium of the developing oocyte expressed in germline stem cells, cystoblasts and developing germline cysts. Expressed in nurse cells in the germarium and egg chamber.

The protein localises to the nucleus. It is found in the chromosome. Its function is as follows. Involved in piRNA (piwi-interacting RNA)-mediated transposon repression. May be involved in formation of the perinuclear nuage, a subcellular structure implicated in RNA processing that may be involved in transposon RNA surveillance and silencing. Required for ping-pong amplification during piRNA biogenesis, probably by promoting transcription of piRNA precursors. As part of the Rhino-Deadlock-Cutoff (RDC) Complex associates with, and drives non-canonical transcription of germline specific dual-strand piRNA clusters 80F, 38C and 42AB, but not single-stranded piRNA cluster 20A. Induction of piRNA expression is potentially achieved through a mechanism that prevents transcriptional termination and leads to readthrough from flanking transcription units. Recruited to specific chromatin regions by a combination of H3K9me2/3 histone methylation and differentially expressed sequence-specific recruitment factors. This association may involve direct interaction with DNA. Associates with chromatin upon exposure to homologous piRNA and facilitates transcriptional read-through. As part of the RDC complex, involved in suppression of splicing. In ovaries, recruitment to specific heterochromatin clusters is nucleated and stabilized by kipf/kipferl. During oogenesis, involved in axis specification and may regulate chromosome condensation at the onset of a mitotic-like phase that occurs during nurse cell chromosome duplication. Involved in the distribution of mRNAs for proteins that play a role in anterior-posterior and dorsal-ventral axes specification during development of the oocyte, including grk/gurken, osk/oskar and vas/vasa. Mitigates meiotic double strand breaks and interacts with DNA damage signaling to mediate axis specification. The protein is Chromo domain-containing protein rhino of Drosophila melanogaster (Fruit fly).